The primary structure comprises 475 residues: Ribulose bisphosphate carboxylase large chain (475 aa).

A propeptide spanning residues 1–2 (MS) is cleaved from the precursor. N-acetylproline is present on Pro3. Lys14 is modified (N6,N6,N6-trimethyllysine). Asn123 and Thr173 together coordinate substrate. The Proton acceptor role is filled by Lys175. Lys177 contacts substrate. Residues Lys201, Asp203, and Glu204 each coordinate Mg(2+). Lys201 carries the N6-carboxylysine modification. His294 functions as the Proton acceptor in the catalytic mechanism. 3 residues coordinate substrate: Arg295, His327, and Ser379.

This sequence belongs to the RuBisCO large chain family. Type I subfamily. As to quaternary structure, heterohexadecamer of 8 large chains and 8 small chains; disulfide-linked. The disulfide link is formed within the large subunit homodimers. It depends on Mg(2+) as a cofactor. Post-translationally, the disulfide bond which can form in the large chain dimeric partners within the hexadecamer appears to be associated with oxidative stress and protein turnover.

The protein localises to the plastid. It is found in the chloroplast. The catalysed reaction is 2 (2R)-3-phosphoglycerate + 2 H(+) = D-ribulose 1,5-bisphosphate + CO2 + H2O. It catalyses the reaction D-ribulose 1,5-bisphosphate + O2 = 2-phosphoglycolate + (2R)-3-phosphoglycerate + 2 H(+). In terms of biological role, ruBisCO catalyzes two reactions: the carboxylation of D-ribulose 1,5-bisphosphate, the primary event in carbon dioxide fixation, as well as the oxidative fragmentation of the pentose substrate in the photorespiration process. Both reactions occur simultaneously and in competition at the same active site. This chain is Ribulose bisphosphate carboxylase large chain, found in Zygnema circumcarinatum (Green alga).